The primary structure comprises 604 residues: Elongation factor 4 (604 aa).

The tr-type G domain occupies Lys-8–Asn-190. GTP contacts are provided by residues Asp-20–Thr-25 and Asn-137–Asp-140.

Belongs to the TRAFAC class translation factor GTPase superfamily. Classic translation factor GTPase family. LepA subfamily.

The protein resides in the cell inner membrane. It carries out the reaction GTP + H2O = GDP + phosphate + H(+). In terms of biological role, required for accurate and efficient protein synthesis under certain stress conditions. May act as a fidelity factor of the translation reaction, by catalyzing a one-codon backward translocation of tRNAs on improperly translocated ribosomes. Back-translocation proceeds from a post-translocation (POST) complex to a pre-translocation (PRE) complex, thus giving elongation factor G a second chance to translocate the tRNAs correctly. Binds to ribosomes in a GTP-dependent manner. The chain is Elongation factor 4 from Fusobacterium nucleatum subsp. nucleatum (strain ATCC 25586 / DSM 15643 / BCRC 10681 / CIP 101130 / JCM 8532 / KCTC 2640 / LMG 13131 / VPI 4355).